A 202-amino-acid polypeptide reads, in one-letter code: Glycerol-3-phosphate acyltransferase (202 aa).

Transmembrane regions (helical) follow at residues 3 to 23 (NLII…LILA), 61 to 81 (IATI…LKFL), 87 to 107 (LLWS…YLLF), 118 to 138 (GAMI…WVVI), 144 to 164 (ISSL…FIFN), and 167 to 187 (LEIH…YKHL).

It belongs to the PlsY family. Probably interacts with PlsX.

It is found in the cell inner membrane. The enzyme catalyses an acyl phosphate + sn-glycerol 3-phosphate = a 1-acyl-sn-glycero-3-phosphate + phosphate. It functions in the pathway lipid metabolism; phospholipid metabolism. Catalyzes the transfer of an acyl group from acyl-phosphate (acyl-PO(4)) to glycerol-3-phosphate (G3P) to form lysophosphatidic acid (LPA). This enzyme utilizes acyl-phosphate as fatty acyl donor, but not acyl-CoA or acyl-ACP. The polypeptide is Glycerol-3-phosphate acyltransferase (Campylobacter jejuni subsp. jejuni serotype O:23/36 (strain 81-176)).